A 533-amino-acid polypeptide reads, in one-letter code: Putative amidase C550.07 (533 aa).

Residues lysine 132 and serine 207 each act as charge relay system in the active site. Serine 231 functions as the Acyl-ester intermediate in the catalytic mechanism.

It belongs to the amidase family.

Its subcellular location is the cytoplasm. The protein resides in the nucleus. The enzyme catalyses a monocarboxylic acid amide + H2O = a monocarboxylate + NH4(+). In Schizosaccharomyces pombe (strain 972 / ATCC 24843) (Fission yeast), this protein is Putative amidase C550.07.